Consider the following 437-residue polypeptide: Xylose isomerase (437 aa).

Active-site residues include His-102 and Asp-105. Positions 233, 269, 272, 297, 308, 310, and 340 each coordinate Mg(2+).

Belongs to the xylose isomerase family. As to quaternary structure, homotetramer. The cofactor is Mg(2+).

The protein resides in the cytoplasm. It carries out the reaction alpha-D-xylose = alpha-D-xylulofuranose. The sequence is that of Xylose isomerase from Novosphingobium aromaticivorans (strain ATCC 700278 / DSM 12444 / CCUG 56034 / CIP 105152 / NBRC 16084 / F199).